Consider the following 296-residue polypeptide: Ribosomal RNA small subunit methyltransferase A (296 aa).

N28, L30, G55, E77, D103, and N122 together coordinate S-adenosyl-L-methionine.

This sequence belongs to the class I-like SAM-binding methyltransferase superfamily. rRNA adenine N(6)-methyltransferase family. RsmA subfamily.

It is found in the cytoplasm. It carries out the reaction adenosine(1518)/adenosine(1519) in 16S rRNA + 4 S-adenosyl-L-methionine = N(6)-dimethyladenosine(1518)/N(6)-dimethyladenosine(1519) in 16S rRNA + 4 S-adenosyl-L-homocysteine + 4 H(+). In terms of biological role, specifically dimethylates two adjacent adenosines (A1518 and A1519) in the loop of a conserved hairpin near the 3'-end of 16S rRNA in the 30S particle. May play a critical role in biogenesis of 30S subunits. In Sinorhizobium fredii (strain NBRC 101917 / NGR234), this protein is Ribosomal RNA small subunit methyltransferase A.